The following is a 466-amino-acid chain: Metaxin-1 (466 aa).

Residues 1-19 (MLLGGPPRSPRSGTSPKGP) are compositionally biased toward low complexity. The interval 1 to 133 (MLLGGPPRSP…AVAGGGPRQG (133 aa)) is disordered. A compositionally biased stretch (polar residues) spans 20 to 36 (WSSTGHVQFGKSPQTWP). Residues 90–110 (ARGPVPRSSAASRARRSLASP) show a composition bias toward low complexity. Glycyl lysine isopeptide (Lys-Gly) (interchain with G-Cter in ubiquitin) cross-links involve residues lysine 187, lysine 190, lysine 227, and lysine 317. Residues 421–441 (ILSVLAGLAAMVGYALLSGIV) traverse the membrane as a helical segment.

It belongs to the metaxin family. As to quaternary structure, interacts with MTX2/metaxin-2. Associates with the mitochondrial contact site and cristae organizing system (MICOS) complex, composed of at least MICOS10/MIC10, CHCHD3/MIC19, CHCHD6/MIC25, APOOL/MIC27, IMMT/MIC60, APOO/MIC23/MIC26 and QIL1/MIC13. This complex was also known under the names MINOS or MitOS complex. The MICOS complex associates with mitochondrial outer membrane proteins SAMM50, MTX1 and MTX2 (together described as components of the mitochondrial outer membrane sorting assembly machinery (SAM) complex) and DNAJC11, mitochondrial inner membrane protein TMEM11 and with HSPA9. The MICOS and SAM complexes together with DNAJC11 are part of a large protein complex spanning both membranes termed the mitochondrial intermembrane space bridging (MIB) complex. Interacts with ARMC1. In terms of processing, ubiquitinated by PRKN during mitophagy, leading to its degradation and enhancement of mitophagy. Deubiquitinated by USP30.

The protein resides in the membrane. The protein localises to the mitochondrion outer membrane. Its function is as follows. Involved in transport of proteins into the mitochondrion. Essential for embryonic development. The chain is Metaxin-1 (MTX1) from Homo sapiens (Human).